Consider the following 408-residue polypeptide: UDP-N-acetylglucosamine--N-acetylmuramyl-(pentapeptide) pyrophosphoryl-undecaprenol N-acetylglucosamine transferase (408 aa).

Residues 1–20 (MNDTVKKPTGGRGDDPLPAG) are disordered. UDP-N-acetyl-alpha-D-glucosamine is bound by residues 41–43 (TAG), Asn160, Arg197, Ser231, and Gln327.

This sequence belongs to the glycosyltransferase 28 family. MurG subfamily.

Its subcellular location is the cell membrane. The catalysed reaction is di-trans,octa-cis-undecaprenyl diphospho-N-acetyl-alpha-D-muramoyl-L-alanyl-D-glutamyl-meso-2,6-diaminopimeloyl-D-alanyl-D-alanine + UDP-N-acetyl-alpha-D-glucosamine = di-trans,octa-cis-undecaprenyl diphospho-[N-acetyl-alpha-D-glucosaminyl-(1-&gt;4)]-N-acetyl-alpha-D-muramoyl-L-alanyl-D-glutamyl-meso-2,6-diaminopimeloyl-D-alanyl-D-alanine + UDP + H(+). It participates in cell wall biogenesis; peptidoglycan biosynthesis. Functionally, cell wall formation. Catalyzes the transfer of a GlcNAc subunit on undecaprenyl-pyrophosphoryl-MurNAc-pentapeptide (lipid intermediate I) to form undecaprenyl-pyrophosphoryl-MurNAc-(pentapeptide)GlcNAc (lipid intermediate II). This chain is UDP-N-acetylglucosamine--N-acetylmuramyl-(pentapeptide) pyrophosphoryl-undecaprenol N-acetylglucosamine transferase, found in Mycobacterium avium (strain 104).